We begin with the raw amino-acid sequence, 658 residues long: MLRSLKALKLNSLNAQKGIRQFCSDSKISGQVIGIDLGTTNSCVAVMQGAEARVLENAEGGRTTPSVVAFTEDNQKIVGLPAKRQMVTNAENTLFATKRLIGRRFDDPMTKKDMTMVPYKIVKGPNGDAWFEVKGKMISPSEAGAMVLQKMKETAETNLGGPVTDAVITVPAYFDDSQRQATRDAGTIAGLKVQRIINEPTAAALAYGFKKDEPKTVAVYDLGGGTFDISILEIVGGVFEVRATNGDTFLGGEDFDNALLEHFVAEFKKEKGIDLTKDTMATQRLREAAEKAKCELSSTLTTEINLPYISAGPSGPVHFNMKLTRSKFEQLVADLIQRTIGPCNICLKDAGLSTSEINEVILVGGMTRMPKVQELAKSTFNKEPFKGVNPDEAVAVGAAIQGGVLKGDTKGIVLVDVTPLSLGIETLGGVFTRLIKKNTNIPASKTDTFSTAADGQSEVEIKVFQGEREMAVDNKLLAKFTLFGLPPLPKGVPQIEVTFDIDVNGMLQVIAKDKATGKAQQVRIQTSGGLSKDDIARILKESEANAEVDRKRKELVEARNNGESVVYQVEKDLVEFKDYLSQPQTEEIKKAVQAVRDVLAKEDGSAIEAEIKKLHDLTRSSFETAYKAKLDSSASKSSSTENKENKDNTTEAEFTEKK.

The segment at 629 to 658 (KLDSSASKSSSTENKENKDNTTEAEFTEKK) is disordered. Positions 631-640 (DSSASKSSST) are enriched in low complexity. Over residues 641 to 658 (ENKENKDNTTEAEFTEKK) the composition is skewed to basic and acidic residues.

This sequence belongs to the heat shock protein 70 family.

Its subcellular location is the mitochondrion. May function in protein folding and assembly, and disassembly of protein complexes. In Dictyostelium discoideum (Social amoeba), this protein is Heat shock 70 kDa protein, mitochondrial (mhsp70).